The following is a 229-amino-acid chain: UPF0488 protein C8orf33 homolog (229 aa).

Residue A2 is modified to N-acetylalanine. At R27 the chain carries Omega-N-methylarginine. The tract at residues 55–101 is disordered; that stretch reads SRAHPLGDEGGTASKKQNKKKKTRNRASVANGGEKASEKLAPEEVPL. Positions 70-79 are enriched in basic residues; the sequence is KQNKKKKTRN. At S82 the chain carries Phosphoserine.

It belongs to the UPF0488 family.

The chain is UPF0488 protein C8orf33 homolog from Pongo abelii (Sumatran orangutan).